The chain runs to 439 residues: Probable serine/threonine-protein kinase WNK6 (439 aa).

The tract at residues 1–30 is disordered; the sequence is MMPPKPAAEDVADEQPEPPDEDPDVAEADP. Acidic residues predominate over residues 10-27; sequence DVADEQPEPPDEDPDVAE. The region spanning 35-293 is the Protein kinase domain; that stretch reads LRYREIIGSG…ASELLKSPFL (259 aa). Residues 116–119 and Lys166 each bind ATP; that span reads TELF. Residue Asp183 is the Proton acceptor of the active site.

This sequence belongs to the protein kinase superfamily. Ser/Thr protein kinase family. WNK subfamily.

The catalysed reaction is L-seryl-[protein] + ATP = O-phospho-L-seryl-[protein] + ADP + H(+). It catalyses the reaction L-threonyl-[protein] + ATP = O-phospho-L-threonyl-[protein] + ADP + H(+). This Oryza sativa subsp. japonica (Rice) protein is Probable serine/threonine-protein kinase WNK6 (WNK6).